Here is a 61-residue protein sequence, read N- to C-terminus: Odorranain-A6 (61 aa).

The N-terminal stretch at 1-22 (MFSMKKSLLLLFFLGTISLSLC) is a signal peptide. Positions 23–45 (EQERDAEEEEGSENGAEDIKINR) are excised as a propeptide.

It belongs to the frog skin active peptide (FSAP) family. Brevinin subfamily. As to expression, expressed by the skin glands.

The protein localises to the secreted. This is Odorranain-A6 from Odorrana hainanensis (Odor frog).